A 410-amino-acid chain; its full sequence is Serine hydroxymethyltransferase (410 aa).

Residues L116 and G120–L122 each bind (6S)-5,6,7,8-tetrahydrofolate. K225 is subject to N6-(pyridoxal phosphate)lysine. S349–F351 provides a ligand contact to (6S)-5,6,7,8-tetrahydrofolate.

This sequence belongs to the SHMT family. As to quaternary structure, homodimer. Pyridoxal 5'-phosphate serves as cofactor.

It localises to the cytoplasm. The catalysed reaction is (6R)-5,10-methylene-5,6,7,8-tetrahydrofolate + glycine + H2O = (6S)-5,6,7,8-tetrahydrofolate + L-serine. It functions in the pathway one-carbon metabolism; tetrahydrofolate interconversion. Its pathway is amino-acid biosynthesis; glycine biosynthesis; glycine from L-serine: step 1/1. Its function is as follows. Catalyzes the reversible interconversion of serine and glycine with tetrahydrofolate (THF) serving as the one-carbon carrier. This reaction serves as the major source of one-carbon groups required for the biosynthesis of purines, thymidylate, methionine, and other important biomolecules. Also exhibits THF-independent aldolase activity toward beta-hydroxyamino acids, producing glycine and aldehydes, via a retro-aldol mechanism. The polypeptide is Serine hydroxymethyltransferase (Leuconostoc mesenteroides subsp. mesenteroides (strain ATCC 8293 / DSM 20343 / BCRC 11652 / CCM 1803 / JCM 6124 / NCDO 523 / NBRC 100496 / NCIMB 8023 / NCTC 12954 / NRRL B-1118 / 37Y)).